We begin with the raw amino-acid sequence, 210 residues long: Imidazole glycerol phosphate synthase subunit HisH (210 aa).

The Glutamine amidotransferase type-1 domain maps to 3–210 (KVALLDYGSG…QLLRNWIDLL (208 aa)). The active-site Nucleophile is cysteine 81. Catalysis depends on residues histidine 191 and glutamate 193.

Heterodimer of HisH and HisF.

It localises to the cytoplasm. The enzyme catalyses 5-[(5-phospho-1-deoxy-D-ribulos-1-ylimino)methylamino]-1-(5-phospho-beta-D-ribosyl)imidazole-4-carboxamide + L-glutamine = D-erythro-1-(imidazol-4-yl)glycerol 3-phosphate + 5-amino-1-(5-phospho-beta-D-ribosyl)imidazole-4-carboxamide + L-glutamate + H(+). It catalyses the reaction L-glutamine + H2O = L-glutamate + NH4(+). It participates in amino-acid biosynthesis; L-histidine biosynthesis; L-histidine from 5-phospho-alpha-D-ribose 1-diphosphate: step 5/9. In terms of biological role, IGPS catalyzes the conversion of PRFAR and glutamine to IGP, AICAR and glutamate. The HisH subunit catalyzes the hydrolysis of glutamine to glutamate and ammonia as part of the synthesis of IGP and AICAR. The resulting ammonia molecule is channeled to the active site of HisF. The polypeptide is Imidazole glycerol phosphate synthase subunit HisH (Corynebacterium diphtheriae (strain ATCC 700971 / NCTC 13129 / Biotype gravis)).